A 136-amino-acid polypeptide reads, in one-letter code: Large ribosomal subunit protein uL16 (136 aa).

Belongs to the universal ribosomal protein uL16 family. In terms of assembly, part of the 50S ribosomal subunit.

Its function is as follows. Binds 23S rRNA and is also seen to make contacts with the A and possibly P site tRNAs. The polypeptide is Large ribosomal subunit protein uL16 (Rickettsia canadensis (strain McKiel)).